A 139-amino-acid chain; its full sequence is Transcription antitermination protein NusB (139 aa).

This sequence belongs to the NusB family.

In terms of biological role, involved in transcription antitermination. Required for transcription of ribosomal RNA (rRNA) genes. Binds specifically to the boxA antiterminator sequence of the ribosomal RNA (rrn) operons. The protein is Transcription antitermination protein NusB of Escherichia fergusonii (strain ATCC 35469 / DSM 13698 / CCUG 18766 / IAM 14443 / JCM 21226 / LMG 7866 / NBRC 102419 / NCTC 12128 / CDC 0568-73).